A 187-amino-acid chain; its full sequence is Peptide deformylase (187 aa).

Residues C107 and H149 each coordinate Fe cation. Residue E150 is part of the active site. A Fe cation-binding site is contributed by H153.

The protein belongs to the polypeptide deformylase family. Fe(2+) serves as cofactor.

It carries out the reaction N-terminal N-formyl-L-methionyl-[peptide] + H2O = N-terminal L-methionyl-[peptide] + formate. Its function is as follows. Removes the formyl group from the N-terminal Met of newly synthesized proteins. Requires at least a dipeptide for an efficient rate of reaction. N-terminal L-methionine is a prerequisite for activity but the enzyme has broad specificity at other positions. In Microchaete diplosiphon (Fremyella diplosiphon), this protein is Peptide deformylase.